An 89-amino-acid chain; its full sequence is Small ribosomal subunit protein uS15 (89 aa).

It belongs to the universal ribosomal protein uS15 family. As to quaternary structure, part of the 30S ribosomal subunit. Forms a bridge to the 50S subunit in the 70S ribosome, contacting the 23S rRNA.

Its function is as follows. One of the primary rRNA binding proteins, it binds directly to 16S rRNA where it helps nucleate assembly of the platform of the 30S subunit by binding and bridging several RNA helices of the 16S rRNA. In terms of biological role, forms an intersubunit bridge (bridge B4) with the 23S rRNA of the 50S subunit in the ribosome. The polypeptide is Small ribosomal subunit protein uS15 (Lactobacillus delbrueckii subsp. bulgaricus (strain ATCC 11842 / DSM 20081 / BCRC 10696 / JCM 1002 / NBRC 13953 / NCIMB 11778 / NCTC 12712 / WDCM 00102 / Lb 14)).